Here is a 110-residue protein sequence, read N- to C-terminus: UPF0060 membrane protein Haur_1798 (110 aa).

Helical transmembrane passes span 7–27, 33–53, 63–83, and 89–109; these read VVLFILAGLAEIAGGYLVWQW, SIWFGVLGAILLVGYGFLPTL, VYAAYGGVFIVLSLAWGWLID, and QPSLVGACLALVGAAIILYWP.

This sequence belongs to the UPF0060 family.

The protein resides in the cell membrane. This chain is UPF0060 membrane protein Haur_1798, found in Herpetosiphon aurantiacus (strain ATCC 23779 / DSM 785 / 114-95).